The primary structure comprises 435 residues: Xylose isomerase (435 aa).

Active-site residues include histidine 99 and aspartate 102. Residues glutamate 230, glutamate 266, histidine 269, aspartate 294, aspartate 305, aspartate 307, and aspartate 337 each contribute to the Mg(2+) site.

Belongs to the xylose isomerase family. As to quaternary structure, homotetramer. Requires Mg(2+) as cofactor.

It is found in the cytoplasm. The enzyme catalyses alpha-D-xylose = alpha-D-xylulofuranose. The sequence is that of Xylose isomerase (xylA) from Tetragenococcus halophilus (Pediococcus halophilus).